The sequence spans 266 residues: Putative carbamate hydrolase RutD (266 aa).

It belongs to the AB hydrolase superfamily. Hydrolase RutD family.

It catalyses the reaction carbamate + 2 H(+) = NH4(+) + CO2. Functionally, involved in pyrimidine catabolism. May facilitate the hydrolysis of carbamate, a reaction that can also occur spontaneously. The polypeptide is Putative carbamate hydrolase RutD (Acinetobacter baylyi (strain ATCC 33305 / BD413 / ADP1)).